The sequence spans 314 residues: ATP synthase gamma chain (314 aa).

This sequence belongs to the ATPase gamma chain family. As to quaternary structure, F-type ATPases have 2 components, CF(1) - the catalytic core - and CF(0) - the membrane proton channel. CF(1) has five subunits: alpha(3), beta(3), gamma(1), delta(1), epsilon(1). CF(0) has three main subunits: a, b and c.

It is found in the cell membrane. Its function is as follows. Produces ATP from ADP in the presence of a proton gradient across the membrane. The gamma chain is believed to be important in regulating ATPase activity and the flow of protons through the CF(0) complex. The protein is ATP synthase gamma chain of Cutibacterium acnes (strain DSM 16379 / KPA171202) (Propionibacterium acnes).